The chain runs to 37 residues: Large ribosomal subunit protein bL36 (37 aa).

The protein belongs to the bacterial ribosomal protein bL36 family.

The protein is Large ribosomal subunit protein bL36 of Thermus thermophilus (strain ATCC BAA-163 / DSM 7039 / HB27).